The following is a 431-amino-acid chain: MAEMDVSSWKPTKLETKPFSLDSGHYTALAFVLAVCVPQAPHGTALRYGLLLLQITCGVQAFLAQPPSVPDRAVLYTSGVLMGNLVARYFDRLYTTVPEKTFHRIIDSQTPEDTTQLSAPKRFFWALELFSVTRGIGWNWRVAGIPKSPVPITRFQFAAAQLLRWTVMYAGLHLVNVTCQVVSSNPNAIPSLPGNLHIYALIVCGFAITIYSHFAILMLPLSALCVGLQVGPRSWQAVASWPPNFGSVREAYSIRRFWGYTWHQQLRRQAGAPGAYLISLLPDSVMTSKRTAVKLARRYSLLMMSFVISGLIHACGTYQVTRALGLPLSDGGEMKYFALQGMAIIAEDFGCWVLGIDDRGTQPGVMRRWMGYAITLSWYIWSRVQLKGVPVALAMGIEDERGDLFAALELVRVSAVAVPGNFVAMAWELIW.

N-linked (GlcNAc...) asparagine glycosylation is present at Asn176. The next 4 membrane-spanning stretches (helical) occupy residues Ile198–Met218, Leu301–Thr321, Tyr336–Ile356, and Leu404–Ala424.

It belongs to the wax synthase family.

Its subcellular location is the membrane. It functions in the pathway secondary metabolite biosynthesis; terpenoid biosynthesis. Its function is as follows. O-Mevalon transferase; part of the gene cluster that mediates the biosynthesis of macrophorins, isoprenoid epoxycyclohexenones containing cyclized drimane moieties. The first step of the pathway is the synthesis of 6-methylsalicylic acid (6-MSA) by the polyketide synthase macA. 6-MSA is then converted to m-cresol by the decarboxylase macB. The cytochrome P450 monooxygenase macC then catalyzes the oxidation of m-cresol to toluquinol. Epoxidation of toluquinol is then performed by the short chain dehydrogenase macD, with the help of macE, and a further prenylation by macG leads to 7-deacetoxyyanuthone A. The next step is the hydroxylation of C-22 of 7-deacetoxyyanuthone A by the cytochrome P450 monooxygenase macH to yield 22-deacetylyanuthone A. O-Mevalon transferase macI then attaches mevalon to the hydroxyl group of 22-deacetylyanuthone A to produce yanuthone E. The terpene cyclase macJ catalyzes the cyclization of 22-deacetylyanuthone A to macrophorin A. MacJ is also able to catalyze cyclization of yanuthone E and 7-deacetoxyyanuthone A to their corresponding macrophorins. The macJ products can be further modified by macH and macJ, as well as by the FAD-dependent monooxygenase macF, to produce additional macrophorins, including 4'-oxomacrophorin A, 4'-oxomacrophorin D and 4'-oxomacrophorin E. The sequence is that of O-Mevalon transferase macI from Penicillium terrestre.